Consider the following 258-residue polypeptide: 3-deoxy-manno-octulosonate cytidylyltransferase (258 aa).

It belongs to the KdsB family.

Its subcellular location is the cytoplasm. The enzyme catalyses 3-deoxy-alpha-D-manno-oct-2-ulosonate + CTP = CMP-3-deoxy-beta-D-manno-octulosonate + diphosphate. The protein operates within nucleotide-sugar biosynthesis; CMP-3-deoxy-D-manno-octulosonate biosynthesis; CMP-3-deoxy-D-manno-octulosonate from 3-deoxy-D-manno-octulosonate and CTP: step 1/1. Its pathway is bacterial outer membrane biogenesis; lipopolysaccharide biosynthesis. Functionally, activates KDO (a required 8-carbon sugar) for incorporation into bacterial lipopolysaccharide in Gram-negative bacteria. The polypeptide is 3-deoxy-manno-octulosonate cytidylyltransferase (Pasteurella multocida (strain Pm70)).